A 1216-amino-acid chain; its full sequence is AF4/FMR2 family member 1 (1216 aa).

6 disordered regions span residues 1 to 52 (MAAH…KGDE), 68 to 104 (KEFLSSKSHPHRLDGSEDRPGKPRYPLGHDRGNGAAS), 116 to 139 (IHTSAPGSRPVGNISHSPKMAQPR), 152 to 217 (PRLT…VSSK), 244 to 275 (AVTSLGSAPPQPPCQTFPPPPLPSKSAAMQQK), and 352 to 728 (SWPP…RTSG). Basic and acidic residues-rich tracts occupy residues 9–35 (NEDRNLLRIREKERRNQEAHQEKEAFP) and 78–99 (HRLDGSEDRPGKPRYPLGHDRG). Residues 166-182 (RKCDRRAEGDSAPERKL) are compositionally biased toward basic and acidic residues. Serine 183, serine 191, and serine 197 each carry phosphoserine. Residues 207–217 (SKAHSSGVSSK) are compositionally biased toward low complexity. The segment covering 252 to 266 (PPQPPCQTFPPPPLP) has biased composition (pro residues). Residues 383 to 406 (PATQSQKQYDTPSKTHPNPQQGTS) are compositionally biased toward polar residues. Positions 408-424 (LEDDLQLSDSEDSDTEQ) are enriched in acidic residues. The span at 429 to 438 (PPSPPAPPSA) shows a compositional bias: pro residues. Over residues 457 to 484 (ESSESDSSSDSESESSSSDSEEEEENEP) the composition is skewed to acidic residues. Lysine 682 is subject to N6-acetyllysine. Positions 710-728 (SQGPSHSSRGSSGSVRTSG) are enriched in low complexity. Phosphoserine occurs at positions 755 and 760. 2 disordered regions span residues 777–969 (RIPQ…RQQA) and 1094–1125 (APSPCTARSTGVPSPLSPMPSPASSVGSQSSA). Residues 789-808 (RKAEDKQLSAGKKQDSETKS) show a composition bias toward basic and acidic residues. Low complexity-rich tracts occupy residues 824 to 846 (KKSTVTRDTNWISRRASSSSSHT), 867 to 886 (PPASASSVSSSSSSQKPSRP), 902 to 915 (PPRSASSTKSSSTD), and 1115 to 1125 (PASSVGSQSSA).

This sequence belongs to the AF4 family. As to quaternary structure, component of the super elongation complex (SEC), at least composed of EAF1, EAF2, CDK9, MLLT3/AF9, AFF (AFF1 or AFF4), the P-TEFb complex and ELL (ELL, ELL2 or ELL3).

The protein resides in the nucleus. In Mus musculus (Mouse), this protein is AF4/FMR2 family member 1 (Aff1).